A 373-amino-acid polypeptide reads, in one-letter code: Citrate synthase (373 aa).

Active-site residues include histidine 262 and aspartate 314.

This sequence belongs to the citrate synthase family. Homohexamer.

It catalyses the reaction oxaloacetate + acetyl-CoA + H2O = citrate + CoA + H(+). The protein operates within carbohydrate metabolism; tricarboxylic acid cycle; isocitrate from oxaloacetate: step 1/2. This Heyndrickxia coagulans (Weizmannia coagulans) protein is Citrate synthase (ctsA).